A 274-amino-acid polypeptide reads, in one-letter code: Dermonecrotic toxin SdSicTox-betaIIB1bvii (274 aa).

H5 is an active-site residue. Mg(2+) is bound by residues E25 and D27. Catalysis depends on H41, which acts as the Nucleophile. 2 disulfides stabilise this stretch: C45/C51 and C47/C190. D85 is a binding site for Mg(2+).

The protein belongs to the arthropod phospholipase D family. Class II subfamily. It depends on Mg(2+) as a cofactor. In terms of tissue distribution, expressed by the venom gland.

The protein resides in the secreted. The enzyme catalyses an N-(acyl)-sphingosylphosphocholine = an N-(acyl)-sphingosyl-1,3-cyclic phosphate + choline. It catalyses the reaction an N-(acyl)-sphingosylphosphoethanolamine = an N-(acyl)-sphingosyl-1,3-cyclic phosphate + ethanolamine. The catalysed reaction is a 1-acyl-sn-glycero-3-phosphocholine = a 1-acyl-sn-glycero-2,3-cyclic phosphate + choline. It carries out the reaction a 1-acyl-sn-glycero-3-phosphoethanolamine = a 1-acyl-sn-glycero-2,3-cyclic phosphate + ethanolamine. Dermonecrotic toxins cleave the phosphodiester linkage between the phosphate and headgroup of certain phospholipids (sphingolipid and lysolipid substrates), forming an alcohol (often choline) and a cyclic phosphate. This toxin acts on sphingomyelin (SM). It may also act on ceramide phosphoethanolamine (CPE), lysophosphatidylcholine (LPC) and lysophosphatidylethanolamine (LPE), but not on lysophosphatidylserine (LPS), and lysophosphatidylglycerol (LPG). It acts by transphosphatidylation, releasing exclusively cyclic phosphate products as second products. Induces dermonecrosis, hemolysis, increased vascular permeability, edema, inflammatory response, and platelet aggregation. The chain is Dermonecrotic toxin SdSicTox-betaIIB1bvii from Sicarius cf. damarensis (strain GJB-2008) (Six-eyed sand spider).